A 471-amino-acid polypeptide reads, in one-letter code: Uronate isomerase (471 aa).

It belongs to the metallo-dependent hydrolases superfamily. Uronate isomerase family.

It carries out the reaction D-glucuronate = D-fructuronate. The catalysed reaction is aldehydo-D-galacturonate = keto-D-tagaturonate. It participates in carbohydrate metabolism; pentose and glucuronate interconversion. The sequence is that of Uronate isomerase from Latilactobacillus sakei subsp. sakei (strain 23K) (Lactobacillus sakei subsp. sakei).